The chain runs to 182 residues: Isopentenyl-diphosphate Delta-isomerase (182 aa).

Positions 25 and 32 each coordinate Mn(2+). A Nudix hydrolase domain is found at 30 to 164 (RLHLAFSSWL…PWAFSPWMVM (135 aa)). C67 is an active-site residue. C67 provides a ligand contact to Mg(2+). A Mn(2+)-binding site is contributed by H69. E87 contributes to the Mg(2+) binding site. Residues E114 and E116 each contribute to the Mn(2+) site. The active site involves E116.

It belongs to the IPP isomerase type 1 family. In terms of assembly, homodimer. Mg(2+) serves as cofactor. It depends on Mn(2+) as a cofactor.

It is found in the cytoplasm. The catalysed reaction is isopentenyl diphosphate = dimethylallyl diphosphate. It participates in isoprenoid biosynthesis; dimethylallyl diphosphate biosynthesis; dimethylallyl diphosphate from isopentenyl diphosphate: step 1/1. Catalyzes the 1,3-allylic rearrangement of the homoallylic substrate isopentenyl (IPP) to its highly electrophilic allylic isomer, dimethylallyl diphosphate (DMAPP). This Shigella dysenteriae serotype 1 (strain Sd197) protein is Isopentenyl-diphosphate Delta-isomerase.